Consider the following 248-residue polypeptide: DnaA regulatory inactivator Hda (248 aa).

It belongs to the DnaA family. HdA subfamily. As to quaternary structure, the active form seems to be an ADP-bound monomer. Forms the RIDA complex (regulatory inactivation of DnaA) of ATP-DnaA, ADP-Hda and the DNA-loaded beta sliding clamp (dnaN).

Functionally, mediates the interaction of DNA replication initiator protein DnaA with DNA polymerase subunit beta sliding clamp (dnaN). Stimulates hydrolysis of ATP-DnaA to ADP-DnaA, rendering DnaA inactive for reinitiation, a process called regulatory inhibition of DnaA or RIDA. This is DnaA regulatory inactivator Hda from Proteus mirabilis (strain HI4320).